The primary structure comprises 74 residues: Mucroporin (74 aa).

Positions 1-22 (MKVKFLLAVFLIVLVVTDHCHA) are cleaved as a signal peptide. A Lysine amide modification is found at lysine 39. The propeptide occupies 45 to 74 (QMEARFEPQNRNYRKRELDLEKLFANMPDY).

It belongs to the non-disulfide-bridged peptide (NDBP) superfamily. Short antimicrobial peptide (group 4) family. As to expression, expressed by the venom gland.

The protein localises to the secreted. Its subcellular location is the target cell membrane. Its function is as follows. Mucroporin: cationic host defense peptide that have antibacterial activity by breaking membranes. Is more effective on Gram-positive than on Gram-negative bacteria. Minimum inhibitory concentrations (MIC) are the following: MIC=&gt;100 ug/ml against E.coli AB94012, MIC=&gt;100 ug/ml against P.aeruginosa AB93066, MIC=25 ug/ml against B.thuringiensis AB92037, MIC=50 ug/ml against B.subtilis AB91021, MIC=25 ug/ml against S.aureus AB94004, and MIC=25 ug/ml against the methicillin-resistant coagulase-negative Staphylococcus. Its synthetic analog mucroporin-M1 is more effective. Does not show antiviral activity against any of measles, SARS-CoV, influenza H5N1, hepatitis B and HIV-1 viruses. Mutant mucroporin-M1: can inhibit Gram-positive bacteria at low concentrations and antibiotic-resistant pathogens. Minimum inhibitory concentrations (MIC) are the following: MIC=12.5 ug/ml against E.coli AB94012, MIC=100 ug/ml against P.aeruginosa AB93066, MIC=25 ug/ml against B.thuringiensis AB92037, MIC=25 ug/ml against B.subtilis AB91021, MIC=5 ug/ml against S.aureus AB94004, and MIC=5 ug/ml against the methicillin-resistant coagulase-negative Staphylococcus. Also shows antiviral activities against measles (EC(50) of 7.15 ug/ml), SARS-CoV (EC(50) of 14.46 ug/ml), influenza H5N1 viruses (EC(50) of 2.10 mug/ml), HIV-1, and hepatitis B virus. The polypeptide is Mucroporin (Lychas mucronatus (Chinese swimming scorpion)).